Consider the following 276-residue polypeptide: Aspartate dehydrogenase domain-containing protein (276 aa).

It belongs to the L-aspartate dehydrogenase family.

The polypeptide is Aspartate dehydrogenase domain-containing protein (aspdh) (Danio rerio (Zebrafish)).